The chain runs to 201 residues: Small ribosomal subunit protein uS4 (201 aa).

A disordered region spans residues 22–47; sequence TGKELARRPYAPGDHGNDRRGKLSEY. The region spanning 93-153 is the S4 RNA-binding domain; it reads RRLDNMVYRL…EKSKNLDVIK (61 aa).

This sequence belongs to the universal ribosomal protein uS4 family. In terms of assembly, part of the 30S ribosomal subunit. Contacts protein S5. The interaction surface between S4 and S5 is involved in control of translational fidelity.

Functionally, one of the primary rRNA binding proteins, it binds directly to 16S rRNA where it nucleates assembly of the body of the 30S subunit. With S5 and S12 plays an important role in translational accuracy. This Limosilactobacillus fermentum (strain NBRC 3956 / LMG 18251) (Lactobacillus fermentum) protein is Small ribosomal subunit protein uS4.